Reading from the N-terminus, the 425-residue chain is Enolase (425 aa).

Q163 provides a ligand contact to (2R)-2-phosphoglycerate. Catalysis depends on E205, which acts as the Proton donor. Residues D242, E286, and D313 each coordinate Mg(2+). Residues K338, R367, S368, and K389 each coordinate (2R)-2-phosphoglycerate. The active-site Proton acceptor is the K338.

Belongs to the enolase family. Mg(2+) serves as cofactor.

It localises to the cytoplasm. Its subcellular location is the secreted. It is found in the cell surface. It catalyses the reaction (2R)-2-phosphoglycerate = phosphoenolpyruvate + H2O. The protein operates within carbohydrate degradation; glycolysis; pyruvate from D-glyceraldehyde 3-phosphate: step 4/5. Functionally, catalyzes the reversible conversion of 2-phosphoglycerate (2-PG) into phosphoenolpyruvate (PEP). It is essential for the degradation of carbohydrates via glycolysis. The sequence is that of Enolase from Lactobacillus delbrueckii subsp. bulgaricus (strain ATCC 11842 / DSM 20081 / BCRC 10696 / JCM 1002 / NBRC 13953 / NCIMB 11778 / NCTC 12712 / WDCM 00102 / Lb 14).